The following is a 432-amino-acid chain: Trigger factor (432 aa).

One can recognise a PPIase FKBP-type domain in the interval 161 to 246 (DDRVTIDFVG…LKKIENMVLP (86 aa)).

Belongs to the FKBP-type PPIase family. Tig subfamily.

Its subcellular location is the cytoplasm. It catalyses the reaction [protein]-peptidylproline (omega=180) = [protein]-peptidylproline (omega=0). Involved in protein export. Acts as a chaperone by maintaining the newly synthesized protein in an open conformation. Functions as a peptidyl-prolyl cis-trans isomerase. The polypeptide is Trigger factor (Haemophilus influenzae (strain 86-028NP)).